The sequence spans 421 residues: MASFPPRVNEKEIVRSRTIGELLAPAAPFDKKCGGENWTVAFAPDGSYFAWSQGYRIVKLVPWSQCRKNFLLHGSKNVTNSSCLKLARQNSNGGQKNKPPEHVIDCGDIVWSLAFGSSVPEKQSRCVNIEWHRFRFGQDQLLLATGLNNGRIKIWDVYTGKLLLNLVDHIEMVRDLTFAPDGSLLLVSASRDKTLRVWDLKDDGNMVKVLRAHQNWVYSCAFSPDCSMLCSVGASKAVFLWNMDKYTMIRKLEGHHHDVVACDFSPDGALLATASYDTRVYVWDPHNGDLLMEFGHLFPSPTPIFAGGANDRWVRAVSFSHDGLHVASLADDKMVRFWRIDEDCPVQVAPLSNGLCCAFSTDGSVLAAGTHDGSVYFWATPRQVPSLQHICRMSIRRVMSTQEVQKLPVPSKILAFLSYRG.

WD repeat units lie at residues 124–165 (SRCV…LLLN), 168–208 (DHIE…NMVK), 212–251 (AHQNWVYSCAFSPDCSMLCSVGASKAVFLWNMDKYTMIRK), 254–293 (GHHHDVVACDFSPDGALLATASYDTRVYVWDPHNGDLLME), and 309–346 (ANDRWVRAVSFSHDGLHVASLADDKMVRFWRIDEDCPV). The SOCS box domain occupies 372–421 (DGSVYFWATPRQVPSLQHICRMSIRRVMSTQEVQKLPVPSKILAFLSYRG).

As to quaternary structure, interacts with DIO2. Component of the probable ECS(WSB1) E3 ubiquitin-protein ligase complex which contains CUL5, RNF7/RBX2, Elongin BC complex and WSB1. Component of a probable ECS-like E3 ubiquitin-protein ligase complex which contains CUL5, RBX1, Elongin BC complex and WSB1. Interacts with CUL5, RNF7, ELOB and ELOC. Binds to HIPK2 through WD40 repeats.

Its pathway is protein modification; protein ubiquitination. Its function is as follows. Probable substrate-recognition component of a SCF-like ECS (Elongin-Cullin-SOCS-box protein) E3 ubiquitin ligase complex which mediates the ubiquitination and subsequent proteasomal degradation of target proteins. Recognizes type II iodothyronine deiodinase/DIO2. Confers constitutive instability to HIPK2 through proteasomal degradation. This is WD repeat and SOCS box-containing protein 1 (Wsb1) from Mus musculus (Mouse).